Reading from the N-terminus, the 699-residue chain is MSKINKLEHIRNIGICAHIDAGKTTTTERILYYTGKSHKIGEVHEGGATMDWMEQEQERGITITSAATTCKWQDKVINIIDTPGHVDFTIEVERSLRVLDGAVAVFDGVAGVEPQSETVWRQADKYNVPRMCFVNKMDRMGADFYKCVDMIKDRLGAKSLILQLPIGIEENFKGIINLIKMKAVIWKDESLGAEYFEEDIPTDMQDKAAEYRARLLDMTVELDDTIMERYLSGEEITEEEIKILIRKGTIEAKFYPVLCGSAFKNKGVQPLLDAIVDFLPSPIDIGIVKGIEVSTSEEKDFPISITEPFSALAFKIMNDPFVGSLTFIRIYSGKITSGASVVNTVKNKREKIGRMLLMHANNREDIKEASAGDIVALAGLKDTSTGDTLSDIDTQVVLERMEFPEPVIELAVEPKSTADQEKMGLALSRLAAEDPSFKVSTDHETGQTVIKGMGELHLEIIIDRMRREFKVEANIGAPQVAYRETITTACEIDYTHKKQSGGAGQFARVKIIFEPLKDVIDLKDEDKNKTFVFESKIVGGAVPKEYIPGVEKGLNNIRETGIVAGYPMIDFKATLVDGAFHDVDSSVLAFEIAAKGAFREGMQKGNPKLLEPIMKVEVITPDEYMGDIIGDLNSRRGQIQSMDPRGNAQVVTAYVPLAEMFGYVNTLRSLSQGRAQFSMIFSHYDQVPSQVADIIKAKK.

In terms of domain architecture, tr-type G spans 8–283 (EHIRNIGICA…AIVDFLPSPI (276 aa)). GTP-binding positions include 17 to 24 (AHIDAGKT), 81 to 85 (DTPGH), and 135 to 138 (NKMD).

This sequence belongs to the TRAFAC class translation factor GTPase superfamily. Classic translation factor GTPase family. EF-G/EF-2 subfamily.

It localises to the cytoplasm. Functionally, catalyzes the GTP-dependent ribosomal translocation step during translation elongation. During this step, the ribosome changes from the pre-translocational (PRE) to the post-translocational (POST) state as the newly formed A-site-bound peptidyl-tRNA and P-site-bound deacylated tRNA move to the P and E sites, respectively. Catalyzes the coordinated movement of the two tRNA molecules, the mRNA and conformational changes in the ribosome. The polypeptide is Elongation factor G (Rickettsia typhi (strain ATCC VR-144 / Wilmington)).